Here is a 2134-residue protein sequence, read N- to C-terminus: Tudor domain-containing protein 6 (2134 aa).

Positions 287–315 (RAPVGTDDEDSGSATWEEREESPDKPGSP) are disordered. Position 292 is a phosphothreonine (threonine 292). 4 Tudor domains span residues 309-368 (PDKP…YFRM), 542-599 (RPEP…FRQL), 820-879 (YEGD…FFQV), and 1038-1092 (TLAP…AHDV). The disordered stretch occupies residues 1271–1296 (SPMSGTKLDSALPERRMGEPSGRDLP). A compositionally biased stretch (basic and acidic residues) spans 1282-1296 (LPERRMGEPSGRDLP). Tudor domains lie at 1358-1417 (QWQS…DAVL) and 1570-1630 (CPQI…LLLV). Disordered regions lie at residues 1699 to 1733 (KKYA…GLKK) and 1860 to 1885 (LQHS…LSPG). The segment covering 1711 to 1722 (LSSEKRGPERKG) has biased composition (basic and acidic residues). Residues serine 1723 and serine 1726 each carry the phosphoserine modification. Serine 1925 carries the post-translational modification Phosphoserine. Residues 1930–1939 (AVSQDIQGSR) show a composition bias toward polar residues. The segment at 1930–1985 (AVSQDIQGSRCSEDERKAGYMGSSDDDHSRSPLLQHGKGGNSPAHDGRNLSEEEFP) is disordered. Residues serine 1980, serine 2063, and serine 2115 each carry the phosphoserine modification.

In terms of assembly, found in a mRNP complex (i.e. messenger ribonucleoproteins which correspond to mRNA with bound proteins), at least composed of TDRD1, TDRD6, TDRD7 and DDX4. Found in a complex, at least composed of PIWIL1, PIWIL2, DDX4 and TDRD6. Interacts with Tex19.1 and probably Tex19.2. Interacts with PRMT5. Interacts with SNRPB (when methylated); to trigger spliceosome formation. Undergoes proteolytic cleavage near the C-terminal by an unknown protease during the transition from meiosis I to meiosis II in primary spermatocytes. As to expression, testis specific. Expressed in primary spermatocytes at post natal (PN) day 17.5. Expressed in midpachytene stage of primary spermatocytes at PN16 and in round spermatids at PN22 (at protein level).

It is found in the cytoplasm. In terms of biological role, tudor domain-containing protein involved in germ cell development, more specifically the formation of chromatoid body (during spermiogenesis), Balbiani body (during oogenesis), germ plasm (upon fertilization), and for proper miRNA expression and spliceosome maturation. Essential for RNA-dependent helicase UPF1 localization to chromatoid body, for UPF1-UPF2 and UPF1-DDX4 interactions which are required for mRNA degradation, using the extended 3' UTR-triggered nonsense-mediated mRNA decay (NMD) pathway. Involved in spliceosome maturation and mRNA splicing in prophase I spermatocytes through interaction with arginine N-methyltransferase PRMT5 and symmetrically arginine dimethylated SNRPB (small nuclear ribonucleoprotein-associated protein). This Mus musculus (Mouse) protein is Tudor domain-containing protein 6.